The sequence spans 93 residues: uncharacterized protein (93 aa).

This is an uncharacterized protein from Haemophilus influenzae (Bacteriophage HP1).